The primary structure comprises 218 residues: Probable nicotinate-nucleotide adenylyltransferase (218 aa).

It belongs to the NadD family.

The enzyme catalyses nicotinate beta-D-ribonucleotide + ATP + H(+) = deamido-NAD(+) + diphosphate. Its pathway is cofactor biosynthesis; NAD(+) biosynthesis; deamido-NAD(+) from nicotinate D-ribonucleotide: step 1/1. In terms of biological role, catalyzes the reversible adenylation of nicotinate mononucleotide (NaMN) to nicotinic acid adenine dinucleotide (NaAD). The sequence is that of Probable nicotinate-nucleotide adenylyltransferase from Acidithiobacillus ferrooxidans (strain ATCC 23270 / DSM 14882 / CIP 104768 / NCIMB 8455) (Ferrobacillus ferrooxidans (strain ATCC 23270)).